We begin with the raw amino-acid sequence, 147 residues long: Large ribosomal subunit protein uL13 (147 aa).

The segment at 128 to 147 (PEHPHSAQQPVPYELKQVAQ) is disordered.

It belongs to the universal ribosomal protein uL13 family. Part of the 50S ribosomal subunit.

This protein is one of the early assembly proteins of the 50S ribosomal subunit, although it is not seen to bind rRNA by itself. It is important during the early stages of 50S assembly. The polypeptide is Large ribosomal subunit protein uL13 (Mycobacterium bovis (strain BCG / Pasteur 1173P2)).